A 1230-amino-acid chain; its full sequence is Myosin-1 (1230 aa).

The interval 1 to 32 is disordered; that stretch reads MGISRRPKADKNASAADSAPGGKPNIQKAQFD. The Myosin motor domain occupies 39–713; that stretch reads VGVSDLTLIS…TLFALEHMRD (675 aa). 132-139 provides a ligand contact to ATP; that stretch reads GESGAGKT. Residues 403–485 form an actin-binding region; that stretch reads SIGILDIYGF…PGVFSAMKDA (83 aa). IQ domains lie at 717–737 and 738–763; these read HNMA…RIEA and ATRI…KGHQ. A TH1 domain is found at 771 to 961; it reads RRRYSLLGSR…TIHTQAGEPP (191 aa). 3 disordered regions span residues 945-1018, 1033-1065, and 1116-1230; these read QDHY…AARP, TRNT…PVSK, and AYLE…EDDW. The span at 1033–1045 shows a compositional bias: polar residues; that stretch reads TRNTSVQSTQSTR. 2 stretches are compositionally biased toward pro residues: residues 1047-1062 and 1122-1142; these read VPPP…PPAP and TPPP…PGPP. Residues 1064 to 1123 enclose the SH3 domain; that stretch reads SKEPQYRVLYEFAGQSANEFSLKQGEIVTVLQKETNGWWLTKNVRGQGWAPTAYLEEVTP. Residues 1179 to 1214 are compositionally biased toward low complexity; that stretch reads RDSGMSISSNGSGNNSGRSTPTPSLAGGLAEALRAR.

This sequence belongs to the TRAFAC class myosin-kinesin ATPase superfamily. Myosin family.

The protein localises to the cytoplasm. The protein resides in the cytoskeleton. It is found in the actin patch. Its function is as follows. Type-I myosin implicated in the organization of the actin cytoskeleton. Required for proper actin cytoskeleton polarization. At the cell cortex, assembles in patch-like structures together with proteins from the actin-polymerizing machinery and promotes actin assembly. Functions as actin nucleation-promoting factor (NPF) for the Arp2/3 complex. This chain is Myosin-1 (myoA), found in Sclerotinia sclerotiorum (strain ATCC 18683 / 1980 / Ss-1) (White mold).